The sequence spans 108 residues: uncharacterized protein (108 aa).

Positions 1 to 22 (MMIKQCVICLSLLVFGTTAAHA) are cleaved as a signal peptide.

This is an uncharacterized protein from Bacillus subtilis (strain 168).